Consider the following 545-residue polypeptide: Thermosome subunit beta (545 aa).

Belongs to the TCP-1 chaperonin family. Forms a Heterooligomeric complex of two stacked eight-membered rings.

Its function is as follows. Molecular chaperone; binds unfolded polypeptides in vitro, and has a weak ATPase activity. The sequence is that of Thermosome subunit beta (thsB) from Archaeoglobus fulgidus (strain ATCC 49558 / DSM 4304 / JCM 9628 / NBRC 100126 / VC-16).